The sequence spans 402 residues: Phosphoglycerate kinase (402 aa).

Residues 24-26, arginine 40, 63-66, arginine 122, and arginine 155 each bind substrate; these read DFN and HFGR. ATP contacts are provided by residues lysine 206, glycine 297, glutamate 328, and 357–360; that span reads GGDS.

The protein belongs to the phosphoglycerate kinase family. In terms of assembly, monomer.

The protein localises to the cytoplasm. The catalysed reaction is (2R)-3-phosphoglycerate + ATP = (2R)-3-phospho-glyceroyl phosphate + ADP. It participates in carbohydrate degradation; glycolysis; pyruvate from D-glyceraldehyde 3-phosphate: step 2/5. This is Phosphoglycerate kinase from Synechococcus sp. (strain RCC307).